A 350-amino-acid polypeptide reads, in one-letter code: Mitochondrial glycine transporter (350 aa).

3 Solcar repeats span residues 23–107 (SKPK…LRQC), 134–218 (LSHT…SKKN), and 250–334 (SSIS…LILK). A run of 6 helical transmembrane segments spans residues 29–54 (FIAG…TRIQ), 82–108 (GTLP…RQCI), 140–165 (LLTG…VRYE), 193–216 (GFGA…EQSK), 254–280 (VNFV…KTRL), and 309–327 (GLGL…AWTV).

The protein belongs to the mitochondrial carrier (TC 2.A.29) family. SLC25A38 subfamily.

It localises to the mitochondrion inner membrane. It catalyses the reaction glycine(in) = glycine(out). Mitochondrial glycine transporter that imports glycine into the mitochondrial matrix. Plays an important role in providing glycine for the first enzymatic step in heme biosynthesis, the condensation of glycine with succinyl-CoA to produce 5-aminolevulinate (ALA) in the mitochondrial matrix. The sequence is that of Mitochondrial glycine transporter from Ajellomyces capsulatus (strain NAm1 / WU24) (Darling's disease fungus).